The sequence spans 243 residues: Ubiquinone/menaquinone biosynthesis C-methyltransferase UbiE (243 aa).

Residues Thr69, Asp90, and 116–117 contribute to the S-adenosyl-L-methionine site; that span reads DA.

This sequence belongs to the class I-like SAM-binding methyltransferase superfamily. MenG/UbiE family.

It catalyses the reaction a 2-demethylmenaquinol + S-adenosyl-L-methionine = a menaquinol + S-adenosyl-L-homocysteine + H(+). The enzyme catalyses a 2-methoxy-6-(all-trans-polyprenyl)benzene-1,4-diol + S-adenosyl-L-methionine = a 5-methoxy-2-methyl-3-(all-trans-polyprenyl)benzene-1,4-diol + S-adenosyl-L-homocysteine + H(+). Its pathway is quinol/quinone metabolism; menaquinone biosynthesis; menaquinol from 1,4-dihydroxy-2-naphthoate: step 2/2. It functions in the pathway cofactor biosynthesis; ubiquinone biosynthesis. In terms of biological role, methyltransferase required for the conversion of demethylmenaquinol (DMKH2) to menaquinol (MKH2) and the conversion of 2-polyprenyl-6-methoxy-1,4-benzoquinol (DDMQH2) to 2-polyprenyl-3-methyl-6-methoxy-1,4-benzoquinol (DMQH2). This is Ubiquinone/menaquinone biosynthesis C-methyltransferase UbiE from Burkholderia cenocepacia (strain HI2424).